Here is a 625-residue protein sequence, read N- to C-terminus: Glutamine--fructose-6-phosphate aminotransferase [isomerizing] (625 aa).

The Nucleophile; for GATase activity role is filled by Cys-2. Positions 2-229 (CGLVGYVGQR…QDQAVVITAD (228 aa)) constitute a Glutamine amidotransferase type-2 domain. SIS domains lie at 298-437 (SDQE…ARGT) and 470-615 (LAYR…VDKP). Catalysis depends on Lys-620, which acts as the For Fru-6P isomerization activity.

In terms of assembly, homodimer.

The protein resides in the cytoplasm. It carries out the reaction D-fructose 6-phosphate + L-glutamine = D-glucosamine 6-phosphate + L-glutamate. Its function is as follows. Catalyzes the first step in hexosamine metabolism, converting fructose-6P into glucosamine-6P using glutamine as a nitrogen source. This is Glutamine--fructose-6-phosphate aminotransferase [isomerizing] from Mycobacterium leprae (strain TN).